The following is a 162-amino-acid chain: Phosphopantetheine adenylyltransferase (162 aa).

A substrate-binding site is contributed by Ser-11. ATP contacts are provided by residues Ser-11–Phe-12 and His-19. Substrate contacts are provided by Lys-43, Val-76, and Arg-90. ATP-binding positions include Gly-91–Arg-93, Glu-101, and His-126–Ser-132.

The protein belongs to the bacterial CoaD family. As to quaternary structure, homohexamer. It depends on Mg(2+) as a cofactor.

Its subcellular location is the cytoplasm. It catalyses the reaction (R)-4'-phosphopantetheine + ATP + H(+) = 3'-dephospho-CoA + diphosphate. Its pathway is cofactor biosynthesis; coenzyme A biosynthesis; CoA from (R)-pantothenate: step 4/5. Its activity is regulated as follows. Is inhibited by a series of cycloalkyl pyrimidines, which also show suppression of bacterial growth. In terms of biological role, reversibly transfers an adenylyl group from ATP to 4'-phosphopantetheine, yielding dephospho-CoA (dPCoA) and pyrophosphate. The protein is Phosphopantetheine adenylyltransferase of Streptococcus pneumoniae (strain ATCC BAA-255 / R6).